The following is a 342-amino-acid chain: Foldase protein PrsA (342 aa).

Residues 1–22 (MVSVKKIVASALVGVLMFSAVG) form the signal peptide. C23 carries the N-palmitoyl cysteine lipid modification. The S-diacylglycerol cysteine moiety is linked to residue C23. One can recognise a PpiC domain in the interval 189–284 (DSGVLTKHLL…FGYHIIQAGA (96 aa)).

The protein belongs to the PrsA family.

It localises to the cell membrane. It carries out the reaction [protein]-peptidylproline (omega=180) = [protein]-peptidylproline (omega=0). Functionally, plays a major role in protein secretion by helping the post-translocational extracellular folding of several secreted proteins. The protein is Foldase protein PrsA of Clostridium perfringens (strain ATCC 13124 / DSM 756 / JCM 1290 / NCIMB 6125 / NCTC 8237 / Type A).